A 410-amino-acid chain; its full sequence is Mating-type locus allele B1 protein (410 aa).

The segment at 1 to 110 (MSSDPNFSLI…FNVVSPDVGC (110 aa)) is variable domain between B alleles. Positions 107 to 184 (DVGCRNLSED…NARRRSGWSH (78 aa)) form a DNA-binding region, homeobox; TALE-type. The interval 111–410 (RNLSEDLPAY…PFLCLSVAFV (300 aa)) is highly conserved between B alleles. Disordered stretches follow at residues 202 to 239 (RAKL…PLTP), 278 to 335 (TPKP…TPEL), and 374 to 395 (ARGN…PDEV). Residues 205–233 (LSSSNQSTPPSSTSDSLSNNLDDVLSDNL) show a composition bias toward low complexity. A Nuclear localization signal motif is present at residues 276 to 308 (KKTPKPGMPRPVTTVAKRHPARKTKPAAKPKSR). The segment covering 291–307 (AKRHPARKTKPAAKPKS) has biased composition (basic residues). Polar residues predominate over residues 312 to 335 (PRASTTPSIDSTLDSSKLESTPEL). The interval 333 to 410 (PELSMCSTAD…PFLCLSVAFV (78 aa)) is not essential for B1 function. Positions 375–388 (RGNRKVKALPKRAG) are enriched in basic residues.

It belongs to the TALE/M-ATYP homeobox family.

The protein localises to the nucleus. In terms of biological role, the B locus has at least 25 alleles, and any combination of two different B alleles yields a multimeric regulatory protein, that activates genes responsible for the pathogenicity and for the sexual development of the fungus within the corn plant. The sequence is that of Mating-type locus allele B1 protein from Mycosarcoma maydis (Corn smut fungus).